The primary structure comprises 176 residues: MTKSYEMVYILRPDLLEEQVQQEINRYRDFLTENEAQEVQIKYWGKRRLAYPIKKLQDGFYVQMNYQGDGKQIAPLERMMRLSDEVIRYLTIKLDKDQYTPNDSPPPEGIIDTPKPVIEPPKPAVESPKPAETTEETAEAVETVEPPAEPAEPVEAVETVDTTEETVEPVDTTSEE.

A disordered region spans residues 97-176; the sequence is DQYTPNDSPP…VEPVDTTSEE (80 aa). Residues 140-160 are compositionally biased toward low complexity; it reads AVETVEPPAEPAEPVEAVETV. A compositionally biased stretch (acidic residues) spans 161–176; sequence DTTEETVEPVDTTSEE.

It belongs to the bacterial ribosomal protein bS6 family.

Binds together with bS18 to 16S ribosomal RNA. This is Small ribosomal subunit protein bS6 from Gloeothece citriformis (strain PCC 7424) (Cyanothece sp. (strain PCC 7424)).